A 98-amino-acid polypeptide reads, in one-letter code: UPF0235 protein CCNA_03737 (98 aa).

It belongs to the UPF0235 family.

This chain is UPF0235 protein CCNA_03737, found in Caulobacter vibrioides (strain NA1000 / CB15N) (Caulobacter crescentus).